A 613-amino-acid polypeptide reads, in one-letter code: Vitamin B12 transporter BtuB (613 aa).

A signal peptide spans 1–22 (MQKSLLAIAMASLLTPISYLHA). The TonB box motif lies at 29-36 (DTVVVTAN). Positions 41 to 154 (VESSVLASIS…IGGVIHIKTI (114 aa)) constitute a TBDR plug domain. The TBDR beta-barrel domain occupies 159-613 (QTKHDANLGY…NWFATVNYRF (455 aa)). A TonB C-terminal box motif is present at residues 591–613 (HSSGGKYYVGEGRNWFATVNYRF).

Belongs to the TonB-dependent receptor family. BtuB (TC 1.B.14.3.1) subfamily.

The protein localises to the cell outer membrane. Its function is as follows. Involved in the active translocation of vitamin B12 (cyanocobalamin) across the outer membrane to the periplasmic space. It derives its energy for transport by interacting with the trans-periplasmic membrane protein TonB. The polypeptide is Vitamin B12 transporter BtuB (Vibrio vulnificus (strain YJ016)).